The chain runs to 771 residues: MSGFFTSLDPRRVQWGAAWYAMHSRILRTKPVESMLEGTGTTTAHGTKLAQVLTTVDLISLGVGSCVGTGMYVVSGLVAKEMAGPGVIVSFIIAAVASILSGVCYAEFGVRVPKTTGSAYTYSYVTVGEFVAFFIGWNLILEYLIGTAAGASALSSMFDSLANHTISRWMADSVGTLNGLGKGEESYPDLLALLIAVIVTIIVALGVKNSIGFNNVLNVLNLAVWVFIMIAGLFFINGKYWAEGQFLPHGWSGVLQGAATCFYAFIGFDIIATTGEEAKNPNTSIPYAITASLVICLTAYVSVSVILTLMVPYYTIDTESPLMEMFVAHGFYAAKFVVAIGSVAGLTVSLLGSLFPMPRVIYAMAGDGLLFRFLAHVSSYTETPVVACIVSGFLAALLALLVSLRDLIEMMSIGTLLAYTLVSVCVLLLRYQPESDIDGFVKFLSEEHTKKKEGILADCEKEACSPVSEGDEFSGPATNTCGAKNLPSLGDNEMLIGKSDKSTYNVNHPNYGTVDMTTGIEADESENIYLIKLKKLIGPHYYTMRIRLGLPGKMDRPTAATGHTVTICVLLLFILMFIFCSFIIFGSDYISEQSWWAILLVVLMVLLISTLVFVILQQPENPKKLPYMAPCLPFVPAFAMLVNIYLMLKLSTITWIRFAVWCFVGLLIYFGYGIWNSTLEISAREEALHQSTYQRYDVDDPFSVEEGFSYATEGESQEDWGGPTEDKGFYYQQMSDAKANGRTSSKAKSKSKHKQNSEALIANDELDYSPE.

Transmembrane regions (helical) follow at residues 58-78, 83-103, 119-141, 187-207, 216-236, and 251-271; these read LISLGVGSCVGTGMYVVSGLV, AGPGVIVSFIIAAVASILSGV, AYTYSYVTVGEFVAFFIGWNLIL, YPDLLALLIAVIVTIIVALGV, VLNVLNLAVWVFIMIAGLFFI, and WSGVLQGAATCFYAFIGFDII. Residue N282 is glycosylated (N-linked (GlcNAc...) asparagine). 5 helical membrane passes run 291 to 311, 336 to 356, 360 to 380, 384 to 404, and 407 to 427; these read ASLVICLTAYVSVSVILTLMV, FVVAIGSVAGLTVSLLGSLFP, VIYAMAGDGLLFRFLAHVSSY, PVVACIVSGFLAALLALLVSL, and LIEMMSIGTLLAYTLVSVCVL. Phosphoserine is present on residues S465, S468, and S488. Transmembrane regions (helical) follow at residues 565-585, 596-616, 628-648, and 655-675; these read VTICVLLLFILMFIFCSFIIF, WAILLVVLMVLLISTLVFVIL, MAPCLPFVPAFAMLVNIYLML, and WIRFAVWCFVGLLIYFGYGIW. Residue N676 is glycosylated (N-linked (GlcNAc...) asparagine). The interval 736 to 771 is disordered; that stretch reads DAKANGRTSSKAKSKSKHKQNSEALIANDELDYSPE. The span at 745–754 shows a compositional bias: basic residues; the sequence is SKAKSKSKHK. Phosphoserine is present on residues S757 and S769.

This sequence belongs to the amino acid-polyamine-organocation (APC) superfamily. Cationic amino acid transporter (CAT) (TC 2.A.3.3) family. As to expression, expressed in skin fibroblasts.

It localises to the lysosome membrane. The catalysed reaction is 4-aminobutanoate(in) = 4-aminobutanoate(out). In terms of biological role, imports 4-aminobutanoate (GABA) into lysosomes. May act as a GABA sensor that regulates mTORC2-dependent INS signaling and gluconeogenesis. The transport mechanism and substrate selectivity remain to be elucidated. This Homo sapiens (Human) protein is Solute carrier family 7 member 14.